The following is a 150-amino-acid chain: Large ribosomal subunit protein bL9 (150 aa).

Belongs to the bacterial ribosomal protein bL9 family.

In terms of biological role, binds to the 23S rRNA. The polypeptide is Large ribosomal subunit protein bL9 (Ruthia magnifica subsp. Calyptogena magnifica).